Reading from the N-terminus, the 684-residue chain is Glycine--tRNA ligase beta subunit (684 aa).

This sequence belongs to the class-II aminoacyl-tRNA synthetase family. Tetramer of two alpha and two beta subunits.

The protein resides in the cytoplasm. The catalysed reaction is tRNA(Gly) + glycine + ATP = glycyl-tRNA(Gly) + AMP + diphosphate. This chain is Glycine--tRNA ligase beta subunit, found in Pseudomonas fluorescens (strain SBW25).